Reading from the N-terminus, the 124-residue chain is Small ribosomal subunit protein uS12 (124 aa).

Asp-89 is subject to 3-methylthioaspartic acid.

It belongs to the universal ribosomal protein uS12 family. Part of the 30S ribosomal subunit. Contacts proteins S8 and S17. May interact with IF1 in the 30S initiation complex.

Its function is as follows. With S4 and S5 plays an important role in translational accuracy. In terms of biological role, interacts with and stabilizes bases of the 16S rRNA that are involved in tRNA selection in the A site and with the mRNA backbone. Located at the interface of the 30S and 50S subunits, it traverses the body of the 30S subunit contacting proteins on the other side and probably holding the rRNA structure together. The combined cluster of proteins S8, S12 and S17 appears to hold together the shoulder and platform of the 30S subunit. The sequence is that of Small ribosomal subunit protein uS12 from Vibrio cholerae serotype O1 (strain ATCC 39315 / El Tor Inaba N16961).